Here is a 320-residue protein sequence, read N- to C-terminus: Probable serine proteinase inhibitor 1 (320 aa).

This sequence belongs to the serpin family. Poxviruses subfamily.

This is Probable serine proteinase inhibitor 1 (SPI-1) from Swinepox virus (strain Kasza) (SWPV).